Consider the following 289-residue polypeptide: MKLRLGIPKGSLQEATIALFLRAGLTVHTSTRSYTATTDDAEVECMLIRAQEMARYVSKGVLDAGITGMDWVVESGLEVEAVSSLNYSKQSRGNVRWVLAVPEDSPYQRAEDLAGKVIATELVNVTSRYFAARGVPVKIEFSWGATEIKPPTLADAIVEVTETGSSLRANRLRIIDEVMPSSTQLIANVSAMQDDFKRKKVENLALMLEGAIAAQGRVGLMLNVRKGDLANALAVLPALNSPTISPLNDGEWVAVNTIIEETAAWTIIPRLKAANATGIVEYPLNKVVL.

It belongs to the ATP phosphoribosyltransferase family. Long subfamily. Mg(2+) serves as cofactor.

The protein resides in the cytoplasm. The enzyme catalyses 1-(5-phospho-beta-D-ribosyl)-ATP + diphosphate = 5-phospho-alpha-D-ribose 1-diphosphate + ATP. It functions in the pathway amino-acid biosynthesis; L-histidine biosynthesis; L-histidine from 5-phospho-alpha-D-ribose 1-diphosphate: step 1/9. With respect to regulation, feedback inhibited by histidine. In terms of biological role, catalyzes the condensation of ATP and 5-phosphoribose 1-diphosphate to form N'-(5'-phosphoribosyl)-ATP (PR-ATP). Has a crucial role in the pathway because the rate of histidine biosynthesis seems to be controlled primarily by regulation of HisG enzymatic activity. The protein is ATP phosphoribosyltransferase of Koribacter versatilis (strain Ellin345).